Consider the following 179-residue polypeptide: Large ribosomal subunit protein uL5 (179 aa).

Belongs to the universal ribosomal protein uL5 family. In terms of assembly, part of the 50S ribosomal subunit; part of the 5S rRNA/L5/L18/L25 subcomplex. Contacts the 5S rRNA and the P site tRNA. Forms a bridge to the 30S subunit in the 70S ribosome.

In terms of biological role, this is one of the proteins that bind and probably mediate the attachment of the 5S RNA into the large ribosomal subunit, where it forms part of the central protuberance. In the 70S ribosome it contacts protein S13 of the 30S subunit (bridge B1b), connecting the 2 subunits; this bridge is implicated in subunit movement. Contacts the P site tRNA; the 5S rRNA and some of its associated proteins might help stabilize positioning of ribosome-bound tRNAs. The sequence is that of Large ribosomal subunit protein uL5 from Pelobacter propionicus (strain DSM 2379 / NBRC 103807 / OttBd1).